The sequence spans 498 residues: L-ornithine N(5)-monooxygenase (498 aa).

FAD-binding positions include E80–H88 and Q99. Residue K104 coordinates substrate. V165 provides a ligand contact to FAD. NADP(+) is bound by residues S251–S254 and R276. Substrate-binding positions include N290–F293 and N320. N320–S322 lines the NADP(+) pocket. Residue S463 to L465 coordinates FAD. S466 lines the substrate pocket.

It belongs to the lysine N(6)-hydroxylase/L-ornithine N(5)-oxygenase family. In terms of assembly, homotetramer. Requires FAD as cofactor.

It carries out the reaction L-ornithine + NADPH + O2 = N(5)-hydroxy-L-ornithine + NADP(+) + H2O. The enzyme catalyses L-ornithine + NADH + O2 = N(5)-hydroxy-L-ornithine + NAD(+) + H2O. It functions in the pathway siderophore biosynthesis. Functionally, catalyzes the conversion of L-ornithine to N(5)-hydroxyornithine, the first step in the biosynthesis of all hydroxamate-containing siderophores, such as the secreted triacetylfusarinine C (TAFC) involved in iron uptake and the intracellular iron storage compound desferriferricrocin (DFFC). The sequence is that of L-ornithine N(5)-monooxygenase from Emericella nidulans (strain FGSC A4 / ATCC 38163 / CBS 112.46 / NRRL 194 / M139) (Aspergillus nidulans).